The chain runs to 425 residues: Enolase (425 aa).

Residues 31 to 54 form a disordered region; that stretch reads TGSAIVPSGASTGEKEAVELRDSD. Positions 43–54 are enriched in basic and acidic residues; sequence GEKEAVELRDSD. Glutamine 162 provides a ligand contact to (2R)-2-phosphoglycerate. The Proton donor role is filled by glutamate 204. 3 residues coordinate Mg(2+): aspartate 241, glutamate 285, and aspartate 312. (2R)-2-phosphoglycerate contacts are provided by lysine 337, arginine 366, serine 367, and lysine 388. Catalysis depends on lysine 337, which acts as the Proton acceptor.

Belongs to the enolase family. It depends on Mg(2+) as a cofactor.

Its subcellular location is the cytoplasm. It is found in the secreted. It localises to the cell surface. The enzyme catalyses (2R)-2-phosphoglycerate = phosphoenolpyruvate + H2O. The protein operates within carbohydrate degradation; glycolysis; pyruvate from D-glyceraldehyde 3-phosphate: step 4/5. In terms of biological role, catalyzes the reversible conversion of 2-phosphoglycerate (2-PG) into phosphoenolpyruvate (PEP). It is essential for the degradation of carbohydrates via glycolysis. This is Enolase from Gloeobacter violaceus (strain ATCC 29082 / PCC 7421).